The chain runs to 161 residues: Phosphopantetheine adenylyltransferase (161 aa).

A substrate-binding site is contributed by Thr-9. Residues 9–10 and His-17 each bind ATP; that span reads TF. Positions 41, 73, and 87 each coordinate substrate. ATP is bound by residues 88 to 90, Glu-98, and 123 to 129; these read GLR and YSFISST.

It belongs to the bacterial CoaD family. As to quaternary structure, homohexamer. Requires Mg(2+) as cofactor.

It is found in the cytoplasm. The enzyme catalyses (R)-4'-phosphopantetheine + ATP + H(+) = 3'-dephospho-CoA + diphosphate. It functions in the pathway cofactor biosynthesis; coenzyme A biosynthesis; CoA from (R)-pantothenate: step 4/5. Functionally, reversibly transfers an adenylyl group from ATP to 4'-phosphopantetheine, yielding dephospho-CoA (dPCoA) and pyrophosphate. The polypeptide is Phosphopantetheine adenylyltransferase (Pseudomonas putida (strain ATCC 47054 / DSM 6125 / CFBP 8728 / NCIMB 11950 / KT2440)).